A 588-amino-acid polypeptide reads, in one-letter code: Probable basic-leucine zipper transcription factor M (588 aa).

Residues 127–157 adopt a coiled-coil conformation; sequence QVEQQQEQEQEQEQQQKQQQQQYIEKQIQEI. Residues 221–240 are compositionally biased toward low complexity; it reads QQNHIDNQSLNNSNTKTSKN. The disordered stretch occupies residues 221–250; that stretch reads QQNHIDNQSLNNSNTKTSKNQQKDNNLPKK. Residues 263–326 form the bZIP domain; sequence NNNNIEKKRD…GSNLMRPEPE (64 aa). The interval 269–289 is basic motif; it reads KKRDQTESSKNFREKKKEYVK. The tract at residues 291-312 is leucine-zipper; sequence IESKILALTLENDKLKKENDSL.

This sequence belongs to the bZIP family.

The protein localises to the nucleus. Its function is as follows. Probable transcriptional regulator. The protein is Probable basic-leucine zipper transcription factor M (bzpM) of Dictyostelium discoideum (Social amoeba).